Reading from the N-terminus, the 370-residue chain is Putative agmatine deiminase (370 aa).

Cys-361 acts as the Amidino-cysteine intermediate in catalysis.

This sequence belongs to the agmatine deiminase family.

The catalysed reaction is agmatine + H2O = N-carbamoylputrescine + NH4(+). This chain is Putative agmatine deiminase, found in Shewanella baltica (strain OS155 / ATCC BAA-1091).